Consider the following 252-residue polypeptide: Probable truncated L-gulonolactone oxidase 7, mitochondrial (252 aa).

Residues 1–102 (MKRSMRSHLA…ELNYGVLVRY (102 aa)) constitute a mitochondrion transit peptide.

It belongs to the oxygen-dependent FAD-linked oxidoreductase family.

Its subcellular location is the mitochondrion. It catalyses the reaction L-gulono-1,4-lactone + O2 = L-ascorbate + H2O2 + H(+). Its pathway is cofactor biosynthesis; L-ascorbate biosynthesis. In terms of biological role, may be involved in the biosynthesis of ascorbic acid. The protein is Probable truncated L-gulonolactone oxidase 7, mitochondrial of Arabidopsis thaliana (Mouse-ear cress).